The primary structure comprises 1026 residues: Adenylate-forming reductase 06235 (1026 aa).

The tract at residues 37–422 is adenylation (A) domain; that stretch reads FEFHAKANPD…LGRIDNQVKI (386 aa). AMP-binding positions include 332–333 and 412–415; these read VT and HLGR. Residues 556-638 are thiolation and peptide carrier (T) domain; it reads SLVSTVGSTV…ALFIWILVTK (83 aa). The segment at 682–901 is reductase (R) domain; sequence CIRRVCARIY…PPTKMWVKGV (220 aa). Residues 685–688, 769–771, and Tyr840 each bind NADP(+); these read RVCA and TAL.

This sequence belongs to the adenylate-forming reductase family.

Functionally, adenylate-forming reductase, a natural product biosynthesis enzyme that resembles non-ribosomal peptide synthetases, yet serves to modify one substrate, rather than to condense two or more building blocks. The A-domain preferentially accepts L-serine, L-alanine and L-valine as substrates. The natural product of the enzyme is not yet known. The polypeptide is Adenylate-forming reductase 06235 (Coprinopsis cinerea (strain Okayama-7 / 130 / ATCC MYA-4618 / FGSC 9003) (Inky cap fungus)).